We begin with the raw amino-acid sequence, 77 residues long: MARVCQVTGKAPMSGNNVSHANNKTKRRFLPNLQNRRFWVESENRWVRLRVSNAGLRLIDKNGIDSVLADLRARGEA.

The segment at 1 to 25 (MARVCQVTGKAPMSGNNVSHANNKT) is disordered.

Belongs to the bacterial ribosomal protein bL28 family.

The sequence is that of Large ribosomal subunit protein bL28 from Paraburkholderia phymatum (strain DSM 17167 / CIP 108236 / LMG 21445 / STM815) (Burkholderia phymatum).